A 143-amino-acid chain; its full sequence is Large ribosomal subunit protein uL11 (143 aa).

It belongs to the universal ribosomal protein uL11 family. Part of the ribosomal stalk of the 50S ribosomal subunit. Interacts with L10 and the large rRNA to form the base of the stalk. L10 forms an elongated spine to which L12 dimers bind in a sequential fashion forming a multimeric L10(L12)X complex. Post-translationally, one or more lysine residues are methylated.

Its function is as follows. Forms part of the ribosomal stalk which helps the ribosome interact with GTP-bound translation factors. The sequence is that of Large ribosomal subunit protein uL11 from Pseudomonas fluorescens (strain Pf0-1).